The following is a 364-amino-acid chain: Methylthioribose-1-phosphate isomerase (364 aa).

D254 serves as the catalytic Proton donor.

The protein belongs to the eIF-2B alpha/beta/delta subunits family. MtnA subfamily.

It is found in the cytoplasm. Its subcellular location is the nucleus. The enzyme catalyses 5-(methylsulfanyl)-alpha-D-ribose 1-phosphate = 5-(methylsulfanyl)-D-ribulose 1-phosphate. The protein operates within amino-acid biosynthesis; L-methionine biosynthesis via salvage pathway; L-methionine from S-methyl-5-thio-alpha-D-ribose 1-phosphate: step 1/6. In terms of biological role, catalyzes the interconversion of methylthioribose-1-phosphate (MTR-1-P) into methylthioribulose-1-phosphate (MTRu-1-P). This Drosophila erecta (Fruit fly) protein is Methylthioribose-1-phosphate isomerase.